The chain runs to 104 residues: Flagellar hook-basal body complex protein FliE (104 aa).

This sequence belongs to the FliE family.

It localises to the bacterial flagellum basal body. The protein is Flagellar hook-basal body complex protein FliE of Serratia proteamaculans (strain 568).